The sequence spans 363 residues: Phosphoserine aminotransferase (363 aa).

L-glutamate is bound at residue Arg42. Pyridoxal 5'-phosphate contacts are provided by residues 76-77, Trp101, Thr151, Asp170, and Gln193; that span reads AS. Lys194 is modified (N6-(pyridoxal phosphate)lysine). A pyridoxal 5'-phosphate-binding site is contributed by 234-235; sequence NT.

This sequence belongs to the class-V pyridoxal-phosphate-dependent aminotransferase family. SerC subfamily. In terms of assembly, homodimer. Pyridoxal 5'-phosphate is required as a cofactor.

The protein localises to the cytoplasm. The catalysed reaction is O-phospho-L-serine + 2-oxoglutarate = 3-phosphooxypyruvate + L-glutamate. The enzyme catalyses 4-(phosphooxy)-L-threonine + 2-oxoglutarate = (R)-3-hydroxy-2-oxo-4-phosphooxybutanoate + L-glutamate. It functions in the pathway amino-acid biosynthesis; L-serine biosynthesis; L-serine from 3-phospho-D-glycerate: step 2/3. Functionally, catalyzes the reversible conversion of 3-phosphohydroxypyruvate to phosphoserine and of 3-hydroxy-2-oxo-4-phosphonooxybutanoate to phosphohydroxythreonine. The protein is Phosphoserine aminotransferase of Listeria innocua serovar 6a (strain ATCC BAA-680 / CLIP 11262).